The primary structure comprises 169 residues: Monothiol glutaredoxin-S15, mitochondrial (169 aa).

A mitochondrion-targeting transit peptide spans 1–37 (MAASLSSRLIKGIANLKAVRSSRLTSASVYQNGMMRF). Positions 38 to 61 (SSTVPSDSDTHDDFKPTQKVPPDS) are disordered. One can recognise a Glutaredoxin domain in the interval 66-168 (KDIVENDVKD…QKLKDVSGNQ (103 aa)). Lys-83 provides a ligand contact to glutathione. Cys-91 is a binding site for [2Fe-2S] cluster. Glutathione contacts are provided by residues Lys-120, Phe-132, and 145 to 146 (SD).

The protein belongs to the glutaredoxin family. CGFS subfamily. [2Fe-2S]-bridged holo-homodimer. Interacts in vitro with SUFE1, BOLA1, BOLA2 and BOLA4. Interacts in vivo only with BOLA4.

It is found in the mitochondrion. Its function is as follows. May only reduce GSH-thiol disulfides, but not protein disulfides. Participates probably to the maturation of iron-sulfur proteins and to the regulation of the redox state of the BOLA proteins. The polypeptide is Monothiol glutaredoxin-S15, mitochondrial (Arabidopsis thaliana (Mouse-ear cress)).